A 256-amino-acid polypeptide reads, in one-letter code: Pimeloyl-[acyl-carrier protein] methyl ester esterase (256 aa).

An AB hydrolase-1 domain is found at 15-242 (HLVLLHGWGL…AAHAPFISHP (228 aa)). Residues Trp22, 82–83 (SL), and 143–147 (FLALQ) contribute to the substrate site. The Nucleophile role is filled by Ser82. Catalysis depends on residues Asp207 and His235. Residue His235 coordinates substrate.

The protein belongs to the AB hydrolase superfamily. Carboxylesterase BioH family. As to quaternary structure, monomer.

It is found in the cytoplasm. It carries out the reaction 6-carboxyhexanoyl-[ACP] methyl ester + H2O = 6-carboxyhexanoyl-[ACP] + methanol + H(+). The protein operates within cofactor biosynthesis; biotin biosynthesis. Its function is as follows. The physiological role of BioH is to remove the methyl group introduced by BioC when the pimeloyl moiety is complete. It allows to synthesize pimeloyl-ACP via the fatty acid synthetic pathway through the hydrolysis of the ester bonds of pimeloyl-ACP esters. The sequence is that of Pimeloyl-[acyl-carrier protein] methyl ester esterase from Salmonella agona (strain SL483).